A 309-amino-acid chain; its full sequence is 4-hydroxy-3-methylbut-2-enyl diphosphate reductase (309 aa).

Cys-12 serves as a coordination point for [4Fe-4S] cluster. (2E)-4-hydroxy-3-methylbut-2-enyl diphosphate contacts are provided by His-41 and His-74. 2 residues coordinate dimethylallyl diphosphate: His-41 and His-74. Isopentenyl diphosphate-binding residues include His-41 and His-74. Residue Cys-96 coordinates [4Fe-4S] cluster. His-124 is a (2E)-4-hydroxy-3-methylbut-2-enyl diphosphate binding site. His-124 is a binding site for dimethylallyl diphosphate. Isopentenyl diphosphate is bound at residue His-124. The active-site Proton donor is Glu-126. Thr-167 serves as a coordination point for (2E)-4-hydroxy-3-methylbut-2-enyl diphosphate. Cys-197 is a binding site for [4Fe-4S] cluster. (2E)-4-hydroxy-3-methylbut-2-enyl diphosphate is bound by residues Ser-225, Ser-226, Asn-227, and Ser-269. Dimethylallyl diphosphate-binding residues include Ser-225, Ser-226, Asn-227, and Ser-269. Ser-225, Ser-226, Asn-227, and Ser-269 together coordinate isopentenyl diphosphate.

The protein belongs to the IspH family. It depends on [4Fe-4S] cluster as a cofactor.

It carries out the reaction isopentenyl diphosphate + 2 oxidized [2Fe-2S]-[ferredoxin] + H2O = (2E)-4-hydroxy-3-methylbut-2-enyl diphosphate + 2 reduced [2Fe-2S]-[ferredoxin] + 2 H(+). The enzyme catalyses dimethylallyl diphosphate + 2 oxidized [2Fe-2S]-[ferredoxin] + H2O = (2E)-4-hydroxy-3-methylbut-2-enyl diphosphate + 2 reduced [2Fe-2S]-[ferredoxin] + 2 H(+). Its pathway is isoprenoid biosynthesis; dimethylallyl diphosphate biosynthesis; dimethylallyl diphosphate from (2E)-4-hydroxy-3-methylbutenyl diphosphate: step 1/1. The protein operates within isoprenoid biosynthesis; isopentenyl diphosphate biosynthesis via DXP pathway; isopentenyl diphosphate from 1-deoxy-D-xylulose 5-phosphate: step 6/6. Catalyzes the conversion of 1-hydroxy-2-methyl-2-(E)-butenyl 4-diphosphate (HMBPP) into a mixture of isopentenyl diphosphate (IPP) and dimethylallyl diphosphate (DMAPP). Acts in the terminal step of the DOXP/MEP pathway for isoprenoid precursor biosynthesis. The chain is 4-hydroxy-3-methylbut-2-enyl diphosphate reductase from Pseudoalteromonas translucida (strain TAC 125).